A 159-amino-acid chain; its full sequence is Ribosomal RNA large subunit methyltransferase H (159 aa).

S-adenosyl-L-methionine-binding positions include Leu-76, Gly-108, and 127 to 132 (FGRLTL).

It belongs to the RNA methyltransferase RlmH family. In terms of assembly, homodimer.

The protein localises to the cytoplasm. The enzyme catalyses pseudouridine(1915) in 23S rRNA + S-adenosyl-L-methionine = N(3)-methylpseudouridine(1915) in 23S rRNA + S-adenosyl-L-homocysteine + H(+). In terms of biological role, specifically methylates the pseudouridine at position 1915 (m3Psi1915) in 23S rRNA. This Streptococcus pneumoniae (strain 70585) protein is Ribosomal RNA large subunit methyltransferase H.